The primary structure comprises 121 residues: Small ribosomal subunit protein uS13 (121 aa).

The tract at residues 94 to 121 (GLPLRGQRTRTNARTRKGPRRAAQSLKK) is disordered.

It belongs to the universal ribosomal protein uS13 family. As to quaternary structure, part of the 30S ribosomal subunit. Forms a loose heterodimer with protein S19. Forms two bridges to the 50S subunit in the 70S ribosome.

In terms of biological role, located at the top of the head of the 30S subunit, it contacts several helices of the 16S rRNA. In the 70S ribosome it contacts the 23S rRNA (bridge B1a) and protein L5 of the 50S subunit (bridge B1b), connecting the 2 subunits; these bridges are implicated in subunit movement. Contacts the tRNAs in the A and P-sites. This Paraburkholderia phymatum (strain DSM 17167 / CIP 108236 / LMG 21445 / STM815) (Burkholderia phymatum) protein is Small ribosomal subunit protein uS13.